The chain runs to 347 residues: MSNQVMLPRESGSFIASHSKDVSLCEEGISRASEIVFKSLKSNAYSYKTWKDHELHPKEMSKATVDWIFVLDTLNFSFWVDDGLEPWTIRHKGKDFQGYWALCAGINRAIEEGIHLTSPSYYRNITIDDLKHIFRSETSTEMPLLEERAKNLRETGNILAQTFQNSFAHMILLANKSAKLLLSMVINNFDCFRDDGDFCNQKVSFYKRAQILIADTWACFEGKGFGEFPDIDFLTMFADYKVPQGLYDLGVLQFSEALKQKLVTGQLIPHGDQLEMEIRGNSIWAVEKIYLAVKLKAKKSPEFSNMDSLELAQYLNSVIIDFYLWDFSKNVEARASIPCHKTRTIFY.

The queuine site is built by H53, F237, D239, D321, and D326. D239 acts as the Nucleophile or transition state stabilizer in catalysis.

It belongs to the QNG1 protein family.

It catalyses the reaction queuosine 5'-phosphate + H2O = queuine + D-ribose 5-phosphate. Catalyzes the hydrolysis of queuosine 5'-phosphate, releasing the nucleobase queuine (q). Is required for salvage of queuine from exogenous queuosine (Q) that is imported and then converted to queuosine 5'-phosphate intracellularly. The polypeptide is Queuosine 5'-phosphate N-glycosylase/hydrolase (Nematostella vectensis (Starlet sea anemone)).